The sequence spans 141 residues: Putative nickel-responsive regulator (141 aa).

Positions 83, 94, 96, and 102 each coordinate Ni(2+).

It belongs to the transcriptional regulatory CopG/NikR family. The cofactor is Ni(2+).

In terms of biological role, transcriptional regulator. The polypeptide is Putative nickel-responsive regulator (Methanopyrus kandleri (strain AV19 / DSM 6324 / JCM 9639 / NBRC 100938)).